Here is a 360-residue protein sequence, read N- to C-terminus: Phospho-N-acetylmuramoyl-pentapeptide-transferase (360 aa).

10 helical membrane-spanning segments follow: residues tyrosine 21–glycine 41, threonine 73–leucine 93, valine 98–tryptophan 118, tryptophan 132–glycine 152, phenylalanine 168–serine 188, glycine 199–threonine 219, alanine 236–tyrosine 256, valine 263–leucine 283, leucine 288–valine 308, and valine 338–lysine 358.

This sequence belongs to the glycosyltransferase 4 family. MraY subfamily. Mg(2+) is required as a cofactor.

The protein resides in the cell inner membrane. It catalyses the reaction UDP-N-acetyl-alpha-D-muramoyl-L-alanyl-gamma-D-glutamyl-meso-2,6-diaminopimeloyl-D-alanyl-D-alanine + di-trans,octa-cis-undecaprenyl phosphate = di-trans,octa-cis-undecaprenyl diphospho-N-acetyl-alpha-D-muramoyl-L-alanyl-D-glutamyl-meso-2,6-diaminopimeloyl-D-alanyl-D-alanine + UMP. It functions in the pathway cell wall biogenesis; peptidoglycan biosynthesis. In terms of biological role, catalyzes the initial step of the lipid cycle reactions in the biosynthesis of the cell wall peptidoglycan: transfers peptidoglycan precursor phospho-MurNAc-pentapeptide from UDP-MurNAc-pentapeptide onto the lipid carrier undecaprenyl phosphate, yielding undecaprenyl-pyrophosphoryl-MurNAc-pentapeptide, known as lipid I. The protein is Phospho-N-acetylmuramoyl-pentapeptide-transferase of Actinobacillus pleuropneumoniae serotype 3 (strain JL03).